The following is a 1395-amino-acid chain: DNA-directed RNA polymerase subunit beta' (1395 aa).

4 residues coordinate Zn(2+): Cys-70, Cys-72, Cys-85, and Cys-88. The Mg(2+) site is built by Asp-461, Asp-463, and Asp-465. Positions 815, 889, 896, and 899 each coordinate Zn(2+).

The protein belongs to the RNA polymerase beta' chain family. In terms of assembly, the RNAP catalytic core consists of 2 alpha, 1 beta, 1 beta' and 1 omega subunit. When a sigma factor is associated with the core the holoenzyme is formed, which can initiate transcription. Mg(2+) is required as a cofactor. It depends on Zn(2+) as a cofactor.

It carries out the reaction RNA(n) + a ribonucleoside 5'-triphosphate = RNA(n+1) + diphosphate. Its function is as follows. DNA-dependent RNA polymerase catalyzes the transcription of DNA into RNA using the four ribonucleoside triphosphates as substrates. The protein is DNA-directed RNA polymerase subunit beta' of Ruthia magnifica subsp. Calyptogena magnifica.